Here is a 905-residue protein sequence, read N- to C-terminus: Protein translocase subunit SecA (905 aa).

ATP is bound by residues Gln89, 107-111, and Asp502; that span reads GEGKT. Zn(2+) is bound by residues Cys889, Cys891, Cys900, and His901.

Belongs to the SecA family. Monomer and homodimer. Part of the essential Sec protein translocation apparatus which comprises SecA, SecYEG and auxiliary proteins SecDF-YajC and YidC. Zn(2+) serves as cofactor.

It is found in the cell inner membrane. It localises to the cytoplasm. It carries out the reaction ATP + H2O + cellular proteinSide 1 = ADP + phosphate + cellular proteinSide 2.. In terms of biological role, part of the Sec protein translocase complex. Interacts with the SecYEG preprotein conducting channel. Has a central role in coupling the hydrolysis of ATP to the transfer of proteins into and across the cell membrane, serving both as a receptor for the preprotein-SecB complex and as an ATP-driven molecular motor driving the stepwise translocation of polypeptide chains across the membrane. The protein is Protein translocase subunit SecA of Bartonella tribocorum (strain CIP 105476 / IBS 506).